A 389-amino-acid polypeptide reads, in one-letter code: S-adenosylmethionine synthase (389 aa).

His15 contributes to the ATP binding site. Position 17 (Asp17) interacts with Mg(2+). Glu43 serves as a coordination point for K(+). Residues Glu56 and Gln99 each coordinate L-methionine. The segment at 99-109 (QSPDIAQGVNE) is flexible loop. ATP-binding positions include 166–168 (DAK), 234–235 (RF), Asp243, 249–250 (RK), Ala266, and Lys270. Residue Asp243 participates in L-methionine binding. Position 274 (Lys274) interacts with L-methionine.

It belongs to the AdoMet synthase family. In terms of assembly, homotetramer; dimer of dimers. It depends on Mg(2+) as a cofactor. K(+) is required as a cofactor.

The protein resides in the cytoplasm. The catalysed reaction is L-methionine + ATP + H2O = S-adenosyl-L-methionine + phosphate + diphosphate. Its pathway is amino-acid biosynthesis; S-adenosyl-L-methionine biosynthesis; S-adenosyl-L-methionine from L-methionine: step 1/1. Functionally, catalyzes the formation of S-adenosylmethionine (AdoMet) from methionine and ATP. The overall synthetic reaction is composed of two sequential steps, AdoMet formation and the subsequent tripolyphosphate hydrolysis which occurs prior to release of AdoMet from the enzyme. This chain is S-adenosylmethionine synthase, found in Neisseria gonorrhoeae (strain NCCP11945).